Reading from the N-terminus, the 269-residue chain is 2-keto-4-pentenoate hydratase (269 aa).

Belongs to the hydratase/decarboxylase family. MhpD subfamily. A divalent metal cation is required as a cofactor.

It carries out the reaction (S)-4-hydroxy-2-oxopentanoate = (2Z)-2-hydroxypenta-2,4-dienoate + H2O. Its pathway is aromatic compound metabolism; 3-phenylpropanoate degradation. Its function is as follows. Catalyzes the conversion of 2-hydroxypentadienoic acid (enolic form of 2-oxopent-4-enoate) to 4-hydroxy-2-ketopentanoic acid. The protein is 2-keto-4-pentenoate hydratase of Paraburkholderia xenovorans (strain LB400).